We begin with the raw amino-acid sequence, 662 residues long: DNA ligase (662 aa).

NAD(+)-binding positions include 34–38 (DYDYD), 83–84 (SI), and E113. K115 (N6-AMP-lysine intermediate) is an active-site residue. 4 residues coordinate NAD(+): R136, E172, K286, and K310. The Zn(2+) site is built by C404, C407, C422, and C427. In terms of domain architecture, BRCT spans 583 to 662 (RESSSCLGKT…NDLLKILYPN (80 aa)).

This sequence belongs to the NAD-dependent DNA ligase family. LigA subfamily. It depends on Mg(2+) as a cofactor. Requires Mn(2+) as cofactor.

The enzyme catalyses NAD(+) + (deoxyribonucleotide)n-3'-hydroxyl + 5'-phospho-(deoxyribonucleotide)m = (deoxyribonucleotide)n+m + AMP + beta-nicotinamide D-nucleotide.. In terms of biological role, DNA ligase that catalyzes the formation of phosphodiester linkages between 5'-phosphoryl and 3'-hydroxyl groups in double-stranded DNA using NAD as a coenzyme and as the energy source for the reaction. It is essential for DNA replication and repair of damaged DNA. In Chlamydia caviae (strain ATCC VR-813 / DSM 19441 / 03DC25 / GPIC) (Chlamydophila caviae), this protein is DNA ligase.